The sequence spans 367 residues: Putative heat shock 70 kDa protein 7 (367 aa).

This sequence belongs to the heat shock protein 70 family.

In Homo sapiens (Human), this protein is Putative heat shock 70 kDa protein 7 (HSPA7).